An 869-amino-acid polypeptide reads, in one-letter code: 1-phosphatidylinositol 4,5-bisphosphate phosphodiesterase 1 (869 aa).

The 36-residue stretch at 269–304 (VSTGQLLEFFQLADINHNGLLNYFEFEKFIKILKNR) folds into the EF-hand domain. 4 residues coordinate Ca(2+): Asp282, Asn284, Asn286, and Glu293. Residues 382–520 (YSKPLNHYFI…LKHKILLKSK (139 aa)) form the PI-PLC X-box domain. Catalysis depends on residues His395 and His439. Substrate contacts are provided by Lys518 and Lys520. A disordered region spans residues 546 to 571 (ANEQELRMKDDSTNSSSATNSSSMQR). A compositionally biased stretch (low complexity) spans 558-568 (TNSSSATNSSS). The 120-residue stretch at 590 to 709 (ISGIHGIKFR…SGYVLKPKKL (120 aa)) folds into the PI-PLC Y-box domain. Ser614 and Arg643 together coordinate substrate. One can recognise a C2 domain in the interval 713-862 (VTKAKMIPLI…EGEQYIFCTL (150 aa)).

Interacts with SGD1. Ca(2+) is required as a cofactor.

The catalysed reaction is a 1,2-diacyl-sn-glycero-3-phospho-(1D-myo-inositol-4,5-bisphosphate) + H2O = 1D-myo-inositol 1,4,5-trisphosphate + a 1,2-diacyl-sn-glycerol + H(+). Its function is as follows. The production of the second messenger molecules diacylglycerol (DAG) and inositol 1,4,5-trisphosphate (IP3) is mediated by activated phosphatidylinositol-specific phospholipase C enzymes. Required for cell growth, osmoresistance and expression of GPD1. The protein is 1-phosphatidylinositol 4,5-bisphosphate phosphodiesterase 1 (PLC1) of Saccharomyces cerevisiae (strain ATCC 204508 / S288c) (Baker's yeast).